Here is a 579-residue protein sequence, read N- to C-terminus: V-type ATP synthase alpha chain (579 aa).

Gly-238–Thr-245 lines the ATP pocket.

Belongs to the ATPase alpha/beta chains family.

The catalysed reaction is ATP + H2O + 4 H(+)(in) = ADP + phosphate + 5 H(+)(out). In terms of biological role, produces ATP from ADP in the presence of a proton gradient across the membrane. The V-type alpha chain is a catalytic subunit. This chain is V-type ATP synthase alpha chain, found in Borrelia hermsii (strain HS1 / DAH).